A 181-amino-acid chain; its full sequence is uncharacterized protein (181 aa).

This sequence belongs to the methyltransferase superfamily.

This is an uncharacterized protein from Bacillus subtilis (strain 168).